Consider the following 365-residue polypeptide: 2-aminoethylphosphonate--pyruvate transaminase (365 aa).

Lysine 194 carries the N6-(pyridoxal phosphate)lysine modification.

Belongs to the class-V pyridoxal-phosphate-dependent aminotransferase family. PhnW subfamily. As to quaternary structure, homodimer. The cofactor is pyridoxal 5'-phosphate.

It catalyses the reaction (2-aminoethyl)phosphonate + pyruvate = phosphonoacetaldehyde + L-alanine. Functionally, involved in phosphonate degradation. The protein is 2-aminoethylphosphonate--pyruvate transaminase of Bacillus mycoides (strain KBAB4) (Bacillus weihenstephanensis).